The chain runs to 200 residues: Protein GrpE (200 aa).

Positions 15 to 47 (DLEMDLNEEELEESEVNEDKEFEELDKSEEENE) are disordered. Residues 16-47 (LEMDLNEEELEESEVNEDKEFEELDKSEEENE) are compositionally biased toward acidic residues.

It belongs to the GrpE family. In terms of assembly, homodimer.

It localises to the cytoplasm. Functionally, participates actively in the response to hyperosmotic and heat shock by preventing the aggregation of stress-denatured proteins, in association with DnaK and GrpE. It is the nucleotide exchange factor for DnaK and may function as a thermosensor. Unfolded proteins bind initially to DnaJ; upon interaction with the DnaJ-bound protein, DnaK hydrolyzes its bound ATP, resulting in the formation of a stable complex. GrpE releases ADP from DnaK; ATP binding to DnaK triggers the release of the substrate protein, thus completing the reaction cycle. Several rounds of ATP-dependent interactions between DnaJ, DnaK and GrpE are required for fully efficient folding. The polypeptide is Protein GrpE (Clostridium tetani (strain Massachusetts / E88)).